We begin with the raw amino-acid sequence, 344 residues long: tRNA N6-adenosine threonylcarbamoyltransferase (344 aa).

Fe cation contacts are provided by His110 and His114. Residues 133 to 137, Asp166, Gly179, and Asn278 each bind substrate; that span reads VMSGA. Asp303 serves as a coordination point for Fe cation.

Belongs to the KAE1 / TsaD family. Fe(2+) serves as cofactor.

It localises to the cytoplasm. The enzyme catalyses L-threonylcarbamoyladenylate + adenosine(37) in tRNA = N(6)-L-threonylcarbamoyladenosine(37) in tRNA + AMP + H(+). Required for the formation of a threonylcarbamoyl group on adenosine at position 37 (t(6)A37) in tRNAs that read codons beginning with adenine. Is involved in the transfer of the threonylcarbamoyl moiety of threonylcarbamoyl-AMP (TC-AMP) to the N6 group of A37, together with TsaE and TsaB. TsaD likely plays a direct catalytic role in this reaction. This Chlamydia felis (strain Fe/C-56) (Chlamydophila felis) protein is tRNA N6-adenosine threonylcarbamoyltransferase.